The chain runs to 58 residues: Temporin-1Th (58 aa).

An N-terminal signal peptide occupies residues 1–22; sequence MFTLKKSLLLLFFLGTINLSLC. A propeptide spanning residues 23-46 is cleaved from the precursor; sequence EEERNAEEERRDEPDERDVQVEKR. A disordered region spans residues 25–46; it reads ERNAEEERRDEPDERDVQVEKR. Leu-56 is subject to Leucine amide.

As to expression, expressed by the skin glands.

The protein resides in the secreted. Functionally, antimicrobial peptide that renders both the outer and inner membrane of bacteria permeable to hydrophobic substances of low molecular mass. This chain is Temporin-1Th, found in Rana temporaria (European common frog).